Consider the following 134-residue polypeptide: Large ribosomal subunit protein bL20 (134 aa).

The protein belongs to the bacterial ribosomal protein bL20 family.

In terms of biological role, binds directly to 23S ribosomal RNA and is necessary for the in vitro assembly process of the 50S ribosomal subunit. It is not involved in the protein synthesizing functions of that subunit. The protein is Large ribosomal subunit protein bL20 of Rhizobium etli (strain ATCC 51251 / DSM 11541 / JCM 21823 / NBRC 15573 / CFN 42).